Here is a 227-residue protein sequence, read N- to C-terminus: Small ribosomal subunit protein uS3 (227 aa).

The region spanning 39 to 108 (IRKFVEERYK…DVTVNVDEVK (70 aa)) is the KH type-2 domain.

Belongs to the universal ribosomal protein uS3 family. Part of the 30S ribosomal subunit. Forms a tight complex with proteins S10 and S14.

In terms of biological role, binds the lower part of the 30S subunit head. Binds mRNA in the 70S ribosome, positioning it for translation. This chain is Small ribosomal subunit protein uS3, found in Persephonella marina (strain DSM 14350 / EX-H1).